The following is a 444-amino-acid chain: Methylenetetrahydrofolate--tRNA-(uracil-5-)-methyltransferase TrmFO (444 aa).

Residue Gly-10–Gly-15 coordinates FAD.

Belongs to the MnmG family. TrmFO subfamily. Requires FAD as cofactor.

The protein resides in the cytoplasm. It carries out the reaction uridine(54) in tRNA + (6R)-5,10-methylene-5,6,7,8-tetrahydrofolate + NADH + H(+) = 5-methyluridine(54) in tRNA + (6S)-5,6,7,8-tetrahydrofolate + NAD(+). The enzyme catalyses uridine(54) in tRNA + (6R)-5,10-methylene-5,6,7,8-tetrahydrofolate + NADPH + H(+) = 5-methyluridine(54) in tRNA + (6S)-5,6,7,8-tetrahydrofolate + NADP(+). Functionally, catalyzes the folate-dependent formation of 5-methyl-uridine at position 54 (M-5-U54) in all tRNAs. The chain is Methylenetetrahydrofolate--tRNA-(uracil-5-)-methyltransferase TrmFO from Streptococcus mutans serotype c (strain ATCC 700610 / UA159).